The primary structure comprises 187 residues: dTTP/UTP pyrophosphatase (187 aa).

The active-site Proton acceptor is Asp68.

The protein belongs to the Maf family. YhdE subfamily. The cofactor is a divalent metal cation.

Its subcellular location is the cytoplasm. The enzyme catalyses dTTP + H2O = dTMP + diphosphate + H(+). It carries out the reaction UTP + H2O = UMP + diphosphate + H(+). Nucleoside triphosphate pyrophosphatase that hydrolyzes dTTP and UTP. May have a dual role in cell division arrest and in preventing the incorporation of modified nucleotides into cellular nucleic acids. The protein is dTTP/UTP pyrophosphatase of Thermus thermophilus (strain ATCC BAA-163 / DSM 7039 / HB27).